A 657-amino-acid chain; its full sequence is UvrABC system protein B (657 aa).

The Helicase ATP-binding domain maps to 25 to 163 (ASIKNGNKYQ…QGMVLFLEIN (139 aa)). Residue 38-45 (GVTGSGKT) participates in ATP binding. The Beta-hairpin motif lies at 91-114 (YYDYYQPEAYIPRQDLFIEKDSSI). The DEAD box signature appears at 130-133 (LSFD). The Helicase C-terminal domain maps to 433–599 (QVEILYDMAK…SVSRNVEESL (167 aa)). Residues 622-657 (AKIVKDLRKQMMEAADKLEFEKAAALRDEIKKMRKL) enclose the UVR domain.

It belongs to the UvrB family. As to quaternary structure, forms a heterotetramer with UvrA during the search for lesions. Interacts with UvrC in an incision complex.

It localises to the cytoplasm. In terms of biological role, the UvrABC repair system catalyzes the recognition and processing of DNA lesions. A damage recognition complex composed of 2 UvrA and 2 UvrB subunits scans DNA for abnormalities. Upon binding of the UvrA(2)B(2) complex to a putative damaged site, the DNA wraps around one UvrB monomer. DNA wrap is dependent on ATP binding by UvrB and probably causes local melting of the DNA helix, facilitating insertion of UvrB beta-hairpin between the DNA strands. Then UvrB probes one DNA strand for the presence of a lesion. If a lesion is found the UvrA subunits dissociate and the UvrB-DNA preincision complex is formed. This complex is subsequently bound by UvrC and the second UvrB is released. If no lesion is found, the DNA wraps around the other UvrB subunit that will check the other stand for damage. This Campylobacter hominis (strain ATCC BAA-381 / DSM 21671 / CCUG 45161 / LMG 19568 / NCTC 13146 / CH001A) protein is UvrABC system protein B.